We begin with the raw amino-acid sequence, 469 residues long: UDP-N-acetylmuramate--L-alanine ligase (469 aa).

Residue 113-119 (GTHGKTT) coordinates ATP.

This sequence belongs to the MurCDEF family.

Its subcellular location is the cytoplasm. It catalyses the reaction UDP-N-acetyl-alpha-D-muramate + L-alanine + ATP = UDP-N-acetyl-alpha-D-muramoyl-L-alanine + ADP + phosphate + H(+). It participates in cell wall biogenesis; peptidoglycan biosynthesis. In terms of biological role, cell wall formation. This Neisseria meningitidis serogroup A / serotype 4A (strain DSM 15465 / Z2491) protein is UDP-N-acetylmuramate--L-alanine ligase.